The following is a 63-amino-acid chain: uncharacterized protein (63 aa).

A helical membrane pass occupies residues 3–23 (IIYIILGFLSLAIGIIGIFPS).

The protein localises to the membrane. This is an uncharacterized protein from Haemophilus influenzae (strain ATCC 51907 / DSM 11121 / KW20 / Rd).